A 1403-amino-acid chain; its full sequence is Centrosomal protein of 162 kDa (1403 aa).

The disordered stretch occupies residues 19-44 (ELSDDSFENSNETPSQPNKDRKKKDT). Positions 26–35 (ENSNETPSQP) are enriched in polar residues. 2 positions are modified to phosphoserine: S156 and S159. Disordered regions lie at residues 171–235 (NVEP…EKTG), 305–342 (DTGEPRIEASPGHSVRSSAKDGLQENEESSKNISTTES), and 449–586 (NPSL…SDDS). Residues 176–189 (EGGRENESEHKELP) show a composition bias toward basic and acidic residues. The span at 192-204 (YSDDFEDAEDTDE) shows a compositional bias: acidic residues. Positions 206-220 (LITKDEETRPKENPE) are enriched in basic and acidic residues. The span at 449–466 (NPSLLPQDNKANQTSRSR) shows a compositional bias: polar residues. S468 is subject to Phosphoserine. The segment covering 481–496 (PCKKARSAPPLPRRKP) has biased composition (basic residues). Residues 504–517 (ARSSGYSKPSSPLQ) show a composition bias toward polar residues. Composition is skewed to basic and acidic residues over residues 522-532 (LEKKTSKDNTK) and 567-581 (PHREGSPATPKRPED). 3 coiled-coil regions span residues 610–1120 (KRAQ…MLSR), 1170–1205 (EVLEENYRLRSELEGLTLEREKLKMESEAAVCQLES), and 1234–1385 (CQNA…LHRQ).

It belongs to the CEP162 family. In terms of assembly, interacts with alpha-tubulin. Interacts with CPNE4. Interacts with CEP290.

The protein resides in the cytoplasm. The protein localises to the cytoskeleton. Its subcellular location is the microtubule organizing center. It localises to the centrosome. It is found in the centriole. The protein resides in the spindle. The protein localises to the nucleus. Required to promote assembly of the transition zone in primary cilia. Acts by specifically recognizing and binding the axonemal microtubule. Localizes to the distal ends of centrioles before ciliogenesis and directly binds to axonemal microtubule, thereby promoting and restricting transition zone formation specifically at the cilia base. Required to mediate CEP290 association with microtubules. The sequence is that of Centrosomal protein of 162 kDa (Cep162) from Rattus norvegicus (Rat).